The following is a 270-amino-acid chain: 3-methyl-2-oxobutanoate hydroxymethyltransferase (270 aa).

Residues aspartate 42 and aspartate 86 each coordinate Mg(2+). 3-methyl-2-oxobutanoate is bound by residues aspartate 42–serine 43, aspartate 86, and lysine 116. Residue glutamate 118 coordinates Mg(2+). Catalysis depends on glutamate 185, which acts as the Proton acceptor.

This sequence belongs to the PanB family. In terms of assembly, homodecamer; pentamer of dimers. Mg(2+) serves as cofactor.

It localises to the cytoplasm. It catalyses the reaction 3-methyl-2-oxobutanoate + (6R)-5,10-methylene-5,6,7,8-tetrahydrofolate + H2O = 2-dehydropantoate + (6S)-5,6,7,8-tetrahydrofolate. It functions in the pathway cofactor biosynthesis; (R)-pantothenate biosynthesis; (R)-pantoate from 3-methyl-2-oxobutanoate: step 1/2. Functionally, catalyzes the reversible reaction in which hydroxymethyl group from 5,10-methylenetetrahydrofolate is transferred onto alpha-ketoisovalerate to form ketopantoate. The polypeptide is 3-methyl-2-oxobutanoate hydroxymethyltransferase (Synechococcus sp. (strain CC9902)).